Here is a 177-residue protein sequence, read N- to C-terminus: Large ribosomal subunit protein uL6 (177 aa).

Belongs to the universal ribosomal protein uL6 family. In terms of assembly, part of the 50S ribosomal subunit.

Functionally, this protein binds to the 23S rRNA, and is important in its secondary structure. It is located near the subunit interface in the base of the L7/L12 stalk, and near the tRNA binding site of the peptidyltransferase center. The protein is Large ribosomal subunit protein uL6 of Actinobacillus pleuropneumoniae serotype 5b (strain L20).